The primary structure comprises 1897 residues: 1,3-beta-glucan synthase component FKS1 (1897 aa).

Residues Met1 to Arg106 are disordered. A compositionally biased stretch (basic and acidic residues) spans His8–Gly29. The span at Gly74–Gly83 shows a compositional bias: low complexity. 17 consecutive transmembrane segments (helical) span residues Ile487–Tyr507, Trp525–Cys545, Leu564–Phe584, Thr591–Phe611, Leu655–Leu675, Ile707–Trp727, Tyr728–Trp748, Asn1329–Leu1349, Cys1386–Leu1406, Phe1473–Ser1493, Thr1497–Phe1517, Ile1588–Leu1608, Ile1630–Gly1650, Phe1666–Phe1686, Val1701–Leu1721, Phe1766–Ile1786, and Phe1826–Val1846.

Belongs to the glycosyltransferase 48 family. In terms of assembly, component of the 1,3-beta-glucan synthase (GS) complex composed of a catalytic subunit fksA and a regulatory subunit.

The protein resides in the mitochondrion. It is found in the cell membrane. The enzyme catalyses [(1-&gt;3)-beta-D-glucosyl](n) + UDP-alpha-D-glucose = [(1-&gt;3)-beta-D-glucosyl](n+1) + UDP + H(+). Its function is as follows. Catalytic subunit of the 1,3-beta-glucan synthase. Synthesizes 1,3-beta-glucan, a major structural component of the fungal cell wall. Involved in cell wall synthesis, maintenance and remodeling. The chain is 1,3-beta-glucan synthase component FKS1 from Aspergillus niger (strain ATCC MYA-4892 / CBS 513.88 / FGSC A1513).